The following is a 151-amino-acid chain: SsrA-binding protein (151 aa).

Residues 121–151 (GKKLHDKRDTEKDREWQREKQRVMKNQRGAA) are disordered. The segment covering 126–142 (DKRDTEKDREWQREKQR) has biased composition (basic and acidic residues).

This sequence belongs to the SmpB family.

Its subcellular location is the cytoplasm. Functionally, required for rescue of stalled ribosomes mediated by trans-translation. Binds to transfer-messenger RNA (tmRNA), required for stable association of tmRNA with ribosomes. tmRNA and SmpB together mimic tRNA shape, replacing the anticodon stem-loop with SmpB. tmRNA is encoded by the ssrA gene; the 2 termini fold to resemble tRNA(Ala) and it encodes a 'tag peptide', a short internal open reading frame. During trans-translation Ala-aminoacylated tmRNA acts like a tRNA, entering the A-site of stalled ribosomes, displacing the stalled mRNA. The ribosome then switches to translate the ORF on the tmRNA; the nascent peptide is terminated with the 'tag peptide' encoded by the tmRNA and targeted for degradation. The ribosome is freed to recommence translation, which seems to be the essential function of trans-translation. The sequence is that of SsrA-binding protein from Chromobacterium violaceum (strain ATCC 12472 / DSM 30191 / JCM 1249 / CCUG 213 / NBRC 12614 / NCIMB 9131 / NCTC 9757 / MK).